The primary structure comprises 344 residues: uncharacterized protein (344 aa).

At 1 to 98 (MIDFVKSRDT…NNDEIGIWNY (98 aa)) the chain is on the cytoplasmic side. Residues 99–119 (ISVAEMGGVLLFLSYWIWTCL) form a helical membrane-spanning segment. His-120 is a topological domain (lumenal). A helical membrane pass occupies residues 121 to 141 (FSKIIFPAQKVICLYIFLFAL). The Cytoplasmic portion of the chain corresponds to 142 to 198 (NQTLQECIEEYVFSSECIKYRQFYSVYEIIDFLRTNFYRLFVIYCALGFGITRTVPK). Residues 199–219 (YLMIKGISIVIALCSVYWISL) traverse the membrane as a helical segment. Residues 220 to 222 (YKD) are Lumenal-facing. A helical transmembrane segment spans residues 223 to 243 (VYVVSEIFDMIQYEVSPAIWV). The Cytoplasmic segment spans residues 244–273 (YSICHLLKQCTSVTTYENASKARFFRRMLN). The helical transmembrane segment at 274–294 (AFIFIFCASPMLHYLSNIIFG) threads the bilayer. Residues 295–344 (NFDYRLSVIIGDLFTFMEKIAFPCYIMFPTHNEALAYNRNVAEEAQEKMI) lie on the Lumenal side of the membrane.

It belongs to the UPF0742 family.

It is found in the endoplasmic reticulum. Its subcellular location is the membrane. This is an uncharacterized protein from Schizosaccharomyces pombe (strain 972 / ATCC 24843) (Fission yeast).